The chain runs to 116 residues: MDKLISKKFSEFQYKYIADPDYKKEYDNNLKALHRIRLSHTTSYRDLAKFADPVCKTMISNEDFVKFNYNKIKKITNEVVNRTALANTALILMEIMKLETNQSVDKDWKRLLDKFL.

This is an uncharacterized protein from Acheta domesticus (House cricket).